Here is a 475-residue protein sequence, read N- to C-terminus: Peripherin (475 aa).

Residues 1-42 form a disordered region; it reads MPSSASMSHHHSSGLRSSISSTSYRRTFGPPPSLSPGAFSYS. A head region spans residues 1–103; sequence MPSSASMSHH…FLATRSNEKQ (103 aa). The segment covering 14–26 has biased composition (low complexity); it reads GLRSSISSTSYRR. Position 24 is a 3'-nitrotyrosine (tyrosine 24). Phosphoserine occurs at positions 35 and 57. Residue serine 66 is modified to Phosphoserine; by PKB/AKT1. In terms of domain architecture, IF rod spans 101–411; that stretch reads EKQELQELND…KLLEGEESRI (311 aa). Residues 104 to 136 form a coil 1A region; the sequence is ELQELNDRFANFIEKVRFLEQQNAALRGELSQA. Positions 137–147 are linker 1; the sequence is RGQEPARADQL. The coil 1B stretch occupies residues 148-243; it reads CQQELRELRR…KLHEEELRDL (96 aa). The interval 244-266 is linker 2; the sequence is QVSVESQQVQQVEVEATVKPELT. Residues 267 to 409 are coil 2; sequence AALRDIRAQY…YRKLLEGEES (143 aa). Position 383 is a 3'-nitrotyrosine (tyrosine 383). Residues 410 to 475 are tail; the sequence is RISVPVHSFA…DLDKSSIHSY (66 aa). Positions 453–475 are disordered; the sequence is EKVVTESQKEQHSDLDKSSIHSY. At tyrosine 475 the chain carries Phosphotyrosine.

Belongs to the intermediate filament family. In terms of assembly, forms homodimers (in vitro). Homopolymerizes into a filamentous network (in vitro). Forms heterodimers with NEFL, NEFM or NEFH (in vitro). Interacts with DST (via C-terminus). Interacts with RAB7A; the interaction is direct. Interacts with PRKCE (via phorbol-ester/DAG-type 2 domain). Post-translationally, phosphorylated; phosphorylation increases after nerve injury in regenerating neurons. In terms of tissue distribution, expressed in the sciatic nerve and at very low levels in the central nervous system (at protein level). Expressed in the spinal cord, in the sciatic nerve at the level of the dorsal root ganglion and in trigeminal nerves (at protein level). Expressed in the cranial nerves in the hindbrain, including the sensory and motor trigeminal neurons, the mesencephalic trigeminal neurons, the spinal trigeminal neurons, and in the facial nerve (at protein level). Expressed in the cerebellum, with expression in the inferior cerebellar peduncle and the lateral deep cerebellar nucleus (at protein level). Expressed in vestibulocochlear neurons, such as the anteroventral cochlear nucleus, the dorsal cochlear nucleus, the superficial granule cell layer and the granule cell lamina (at protein level). Expressed in glossopharyngeal, vagal and hypoglossal neurons (at protein level). Expressed in peripheral sensory neurons, in the dorsal root ganglia and the spinal cord, and to a lower extent in motor neurons. Expressed in the optic tract of the central nervous system, especially in the lateral geniculate nucleus and the superior colliculus. Expressed in neurons of the pineal stalk in the cortex. Expressed in the spinal trigeminal tract of the midbrain, in the medulla and in the medial cerebellar peduncle.

It localises to the cytoplasm. The protein localises to the cytoskeleton. It is found in the cell projection. Its subcellular location is the axon. The protein resides in the perikaryon. Class-III neuronal intermediate filament protein. May form an independent structural network without the involvement of other neurofilaments or may cooperate with the neuronal intermediate filament proteins NEFL, NEFH, NEFM and INA to form filamentous networks. Assembly of the neuronal intermediate filaments may be regulated by RAB7A. Plays a role in the development of unmyelinated sensory neurons. May be involved in axon elongation and axon regeneration after injury. Inhibits neurite extension in type II spiral ganglion neurons in the cochlea. This Mus musculus (Mouse) protein is Peripherin (Prph).